We begin with the raw amino-acid sequence, 113 residues long: N(2)-fixation sustaining protein CowN (113 aa).

This sequence belongs to the CowN family.

In terms of biological role, is required to sustain N(2)-dependent growth in the presence of low levels of carbon monoxide (CO). Probably acts by protecting the N(2) fixation ability of the nitrogenase complex, which is inactivated in the presence of CO. The protein is N(2)-fixation sustaining protein CowN of Azoarcus sp. (strain BH72).